A 445-amino-acid chain; its full sequence is MISLNIEKTFGFISKEKVSAYEAEVKAAQEMLEKGTGEGNDFLGWLHLPSSISKEHLADLNATAKVLRDNCEVVIVAGIGGSYLGARAVIEALSNSFTWLQDKKTAPVMIYAGHNISEDYLYELTEYLKDKKFGVINISKSGTTTETALAFRLLKKQCEDQRGKETAKKVIVAVTDAKKGAARVTADKEGYKTFIIPDNVGGRFSVLTPVGLLPIAVAGFDIDKLVAGAADMEKACGSDVPFAENPAAIYAATRNELYRQGKKIEILVNFCPKLHYVSEWWKQLYGESEGKDNKGIFPASVDFSTDLHSMGQWIQEGERSIFETVISLDKVDHKLEVPFDEANLDGLNFLAGKRVDEVNKMAELGTQLAHVDGGVPNMRIVLPELSEYNIGGLLYFFEKACGISGYLLGVNPFNQPGVEAYKKNMFALLNKPGYEEESKAIQAKL.

Residue E287 is the Proton donor of the active site. Active-site residues include H308 and K422.

The protein belongs to the GPI family.

It localises to the cytoplasm. The catalysed reaction is alpha-D-glucose 6-phosphate = beta-D-fructose 6-phosphate. It participates in carbohydrate biosynthesis; gluconeogenesis. It functions in the pathway carbohydrate degradation; glycolysis; D-glyceraldehyde 3-phosphate and glycerone phosphate from D-glucose: step 2/4. In terms of biological role, catalyzes the reversible isomerization of glucose-6-phosphate to fructose-6-phosphate. In Bacteroides thetaiotaomicron (strain ATCC 29148 / DSM 2079 / JCM 5827 / CCUG 10774 / NCTC 10582 / VPI-5482 / E50), this protein is Glucose-6-phosphate isomerase.